Here is a 253-residue protein sequence, read N- to C-terminus: Imidazole glycerol phosphate synthase subunit HisF (253 aa).

Residues D11 and D130 contribute to the active site.

Belongs to the HisA/HisF family. Heterodimer of HisH and HisF.

Its subcellular location is the cytoplasm. It carries out the reaction 5-[(5-phospho-1-deoxy-D-ribulos-1-ylimino)methylamino]-1-(5-phospho-beta-D-ribosyl)imidazole-4-carboxamide + L-glutamine = D-erythro-1-(imidazol-4-yl)glycerol 3-phosphate + 5-amino-1-(5-phospho-beta-D-ribosyl)imidazole-4-carboxamide + L-glutamate + H(+). It functions in the pathway amino-acid biosynthesis; L-histidine biosynthesis; L-histidine from 5-phospho-alpha-D-ribose 1-diphosphate: step 5/9. Its function is as follows. IGPS catalyzes the conversion of PRFAR and glutamine to IGP, AICAR and glutamate. The HisF subunit catalyzes the cyclization activity that produces IGP and AICAR from PRFAR using the ammonia provided by the HisH subunit. In Thermoanaerobacter sp. (strain X514), this protein is Imidazole glycerol phosphate synthase subunit HisF.